Reading from the N-terminus, the 132-residue chain is Putative esterase Ta0293 (132 aa).

Belongs to the thioesterase PaaI family.

The protein is Putative esterase Ta0293 of Thermoplasma acidophilum (strain ATCC 25905 / DSM 1728 / JCM 9062 / NBRC 15155 / AMRC-C165).